The sequence spans 515 residues: Histidine ammonia-lyase (515 aa).

The segment at residues 146–148 is a cross-link (5-imidazolinone (Ala-Gly)); that stretch reads ASG. Serine 147 carries the post-translational modification 2,3-didehydroalanine (Ser).

The protein belongs to the PAL/histidase family. In terms of processing, contains an active site 4-methylidene-imidazol-5-one (MIO), which is formed autocatalytically by cyclization and dehydration of residues Ala-Ser-Gly.

Its subcellular location is the cytoplasm. It catalyses the reaction L-histidine = trans-urocanate + NH4(+). Its pathway is amino-acid degradation; L-histidine degradation into L-glutamate; N-formimidoyl-L-glutamate from L-histidine: step 1/3. The protein is Histidine ammonia-lyase (hutH) of Ralstonia nicotianae (strain ATCC BAA-1114 / GMI1000) (Ralstonia solanacearum).